Consider the following 63-residue polypeptide: Protein CYSTEINE-RICH TRANSMEMBRANE MODULE 12 (63 aa).

Residues 1 to 34 (MQDMRDQNPPQGYPAAEQVSEQPGQDKKKKKPRF) form a disordered region. Residues 40-56 (KGDRGFIEGCLFALCCC) traverse the membrane as a helical segment.

This sequence belongs to the CYSTM1 family. In terms of assembly, homodimer and heterodimers. Binds weakly to CYSTM4, CYSTM6 and CYSTM7. Mostly expressed in roots, flowers and siliques and, to a lower extent, in stems and leaves.

It is found in the cell membrane. The protein resides in the cytoplasm. Functionally, involved in resistance to abiotic stress. In Arabidopsis thaliana (Mouse-ear cress), this protein is Protein CYSTEINE-RICH TRANSMEMBRANE MODULE 12.